Reading from the N-terminus, the 398-residue chain is Acetate kinase (398 aa).

N8 is a binding site for Mg(2+). K15 provides a ligand contact to ATP. R89 is a binding site for substrate. The active-site Proton donor/acceptor is the D146. Residues 206–210 (HIGNG), 283–285 (DMR), and 331–335 (GMGEN) contribute to the ATP site. E383 contacts Mg(2+).

This sequence belongs to the acetokinase family. In terms of assembly, homodimer. Mg(2+) serves as cofactor. Mn(2+) is required as a cofactor.

Its subcellular location is the cytoplasm. It catalyses the reaction acetate + ATP = acetyl phosphate + ADP. It functions in the pathway metabolic intermediate biosynthesis; acetyl-CoA biosynthesis; acetyl-CoA from acetate: step 1/2. Functionally, catalyzes the formation of acetyl phosphate from acetate and ATP. Can also catalyze the reverse reaction. This is Acetate kinase from Streptococcus pyogenes serotype M28 (strain MGAS6180).